Here is a 368-residue protein sequence, read N- to C-terminus: Cobalt-precorrin-5B C(1)-methyltransferase (368 aa).

The protein belongs to the CbiD family.

The catalysed reaction is Co-precorrin-5B + S-adenosyl-L-methionine = Co-precorrin-6A + S-adenosyl-L-homocysteine. It functions in the pathway cofactor biosynthesis; adenosylcobalamin biosynthesis; cob(II)yrinate a,c-diamide from sirohydrochlorin (anaerobic route): step 6/10. Its function is as follows. Catalyzes the methylation of C-1 in cobalt-precorrin-5B to form cobalt-precorrin-6A. This is Cobalt-precorrin-5B C(1)-methyltransferase from Brucella ovis (strain ATCC 25840 / 63/290 / NCTC 10512).